The chain runs to 1030 residues: Beta-galactosidase (1030 aa).

Substrate contacts are provided by Asn99 and Asp197. Asp197 contacts Na(+). The Mg(2+) site is built by Glu411, His413, and Glu456. Residues Glu456 and 532–535 each bind substrate; that span reads EYAH. The active-site Proton donor is the Glu456. Glu532 (nucleophile) is an active-site residue. Residue Asn592 participates in Mg(2+) binding. 2 residues coordinate Na(+): Phe596 and Asn599. The substrate site is built by Asn599 and Trp1004.

This sequence belongs to the glycosyl hydrolase 2 family. As to quaternary structure, homotetramer. Mg(2+) is required as a cofactor. Requires Na(+) as cofactor.

It catalyses the reaction Hydrolysis of terminal non-reducing beta-D-galactose residues in beta-D-galactosides.. The chain is Beta-galactosidase from Photobacterium profundum (strain SS9).